The sequence spans 465 residues: MKMVSRITAIGLAGVAICYLGLSGYVWYHDNKRSKQADVQASAVSENNKVLGFLREKGCDYCHTPSAELPAYYYIPGAKQLMDYDIKLGYKSFNLEAVRAALLADKPVSQSDLNKIEWVMQYETMPPTRYTALHWAGKVSDEERAEILAWIAKQRAEYYASNDTAPEHRNEPVQPIPQKLPTDAQKVALGFALYHDPRLSADSTISCAHCHALNAGGVDGRKTSIGVGGAVGPINAPTVFNSVFNVEQFWDGRAATLQDQAGGPPLNPIEMASKSWDEIIAKLEKDPQLKTQFLEVYPQGFSGENITDAIAEFEKTLITPDSPFDKWLRGDENALTAQQKKGYQLFKDNKCATCHGGIILGGRSFEPLGLKKDFNFGEITAADIGRMNVTKEERDKLRQKVPGLRNVALTAPYFHRGDVPTLDGAVKLMLRYQVGKELPQEDVDDIVAFLHSLNGVYTPYMQDKQ.

At 1-6 the chain is on the cytoplasmic side; it reads MKMVSR. A helical transmembrane segment spans residues 7–27; sequence ITAIGLAGVAICYLGLSGYVW. Topologically, residues 28–465 are periplasmic; that stretch reads YHDNKRSKQA…VYTPYMQDKQ (438 aa). Cytochrome c domains follow at residues 42–155, 185–287, and 337–454; these read SAVS…AKQR, QKVA…EKDP, and AQQK…HSLN. 11 residues coordinate heme c: C59, C62, H63, M125, C207, C210, H211, C351, C354, H355, and M429.

In terms of assembly, the recombinant enzyme lacking its transmembrane domain is a monomer in solution. Heme c is required as a cofactor.

It localises to the cell inner membrane. Its activity is regulated as follows. Does not require reductive activation for maximum activity, as peroxidatic heme is high-spin His/OH(-) 6-coordinated. Calcium ions are needed to attain maximum peroxidase activity. Cytochrome peroxidase that enables anaerobic respiration with H(2)O(2) as a terminal electron acceptor. It receives electrons from the quinol pool. Menaquinol is probably the electron donor in vivo. It can use menadiol (a menaquinol analog), hydroquinone, duroquinol and the artificial electron donor ABTS(2-) in vitro, but only menadiol and hydroquinone can efficiently transfer electrons to Ccp, maintaining the catalytic activity of the enzyme. It enables E.coli to grow on a nonfermentable carbon source when H(2)O(2) is supplied. Plays a role in the peroxide stress response under anaerobic conditions. However, it does not degrade H(2)O(2) quickly enough to lower the periplasmic H(2)O(2) level below that of the surrounding medium and protect the cell from its toxic effects. The polypeptide is Cytochrome c peroxidase Ccp (Escherichia coli (strain K12)).